Consider the following 190-residue polypeptide: UPF0340 protein BC_5317 (190 aa).

The protein belongs to the UPF0340 family.

This chain is UPF0340 protein BC_5317, found in Bacillus cereus (strain ATCC 14579 / DSM 31 / CCUG 7414 / JCM 2152 / NBRC 15305 / NCIMB 9373 / NCTC 2599 / NRRL B-3711).